Reading from the N-terminus, the 134-residue chain is Neuropeptide-like peptide 11 (134 aa).

The first 20 residues, 1–20 (MMSTLALVSLAIFGIAVVCA), serve as a signal peptide directing secretion. The propeptide occupies 21–106 (APKPATVPVA…YNRLIDAGKK (86 aa)). Ala131 is subject to Alanine amide.

The sequence is that of Neuropeptide-like peptide 11 (nlp-11) from Caenorhabditis elegans.